The sequence spans 338 residues: Sesquiterpene synthase 2 (338 aa).

Positions 93, 228, 232, and 236 each coordinate Mg(2+). Residues 93 to 97 (DNISD) carry the DDXXD motif motif. An NSE/DTE motif motif is present at residues 228-236 (NDIFSYNVE). The (2E,6E)-farnesyl diphosphate site is built by arginine 316 and tyrosine 317.

It belongs to the terpene synthase family. Mg(2+) is required as a cofactor.

It carries out the reaction (2E,6E)-farnesyl diphosphate = alpha-copaene + diphosphate. The catalysed reaction is (2E,6E)-farnesyl diphosphate = beta-copaene + diphosphate. The enzyme catalyses (2E,6E)-farnesyl diphosphate = alpha-muurolene + diphosphate. It catalyses the reaction (2E,6E)-farnesyl diphosphate = gamma-muurolene + diphosphate. It carries out the reaction (2E,6E)-farnesyl diphosphate = delta-cadinene + diphosphate. Its function is as follows. Terpene cyclase that catalyzes the cyclization of farnesyl diphosphate (FPP) to various sesquiterpenes, including alpha-copaene, beta-copaene, beta-elemene, alpha-muurolene, gamma-muurolene and delta-cadinene. This is Sesquiterpene synthase 2 from Postia placenta (strain ATCC 44394 / Madison 698-R) (Brown rot fungus).